The primary structure comprises 424 residues: MDKLVIKGGSRISGTITASGSKNTSLPIIAATLLTGNGTFTLHHIPDLKDIVTFTQLLHHLGAETTYEGNTLKVSSRNVQSLQAPYELVKKMRASIYVLGPMLARFGHARVSLPGGCAFGPRPIDLHLMAMEKLGATITIETGFIDATIPGGKLQGGHITFPISSVGATGNALMAAVLAEGTTTISNAAAEPEIETLCKFLIAMGATIRGTGTTELEIEGCNTLKAIEFKNVFDRIEAGTLLAAAAITGGDITVNGVEPEQMKAVLKKFVHAGCLVETTDNSITLKSPKKLIPTDVTAKPYPAFPTDMQAQWIALMTQAEGSSHITDKVYHERFNHIPELNRLGAHIEIHKNQAIVHGPQQLSGTKVMSTDLRASASLVLAGLVAEGTTEVLRVYHLDRGYEKIEIKLNSLGADISREKYDEFH.

Position 22–23 (22–23 (KN)) interacts with phosphoenolpyruvate. Arginine 93 is a binding site for UDP-N-acetyl-alpha-D-glucosamine. Catalysis depends on cysteine 117, which acts as the Proton donor. Position 117 is a 2-(S-cysteinyl)pyruvic acid O-phosphothioketal (cysteine 117). Residues 122 to 126 (RPIDL), aspartate 307, and valine 329 each bind UDP-N-acetyl-alpha-D-glucosamine.

The protein belongs to the EPSP synthase family. MurA subfamily.

It is found in the cytoplasm. It carries out the reaction phosphoenolpyruvate + UDP-N-acetyl-alpha-D-glucosamine = UDP-N-acetyl-3-O-(1-carboxyvinyl)-alpha-D-glucosamine + phosphate. It participates in cell wall biogenesis; peptidoglycan biosynthesis. Cell wall formation. Adds enolpyruvyl to UDP-N-acetylglucosamine. The sequence is that of UDP-N-acetylglucosamine 1-carboxyvinyltransferase from Pelodictyon phaeoclathratiforme (strain DSM 5477 / BU-1).